We begin with the raw amino-acid sequence, 145 residues long: Heat shock protein hsp-16.2 (145 aa).

A sHSP domain is found at 32-137; that stretch reads VCRISPSESS…QGRSIPIQQA (106 aa).

The protein belongs to the small heat shock protein (HSP20) family.

The chain is Heat shock protein hsp-16.2 from Caenorhabditis elegans.